We begin with the raw amino-acid sequence, 160 residues long: RNA pyrophosphohydrolase (160 aa).

One can recognise a Nudix hydrolase domain in the interval 10-154 (PYRPCVGVML…KRDVYVAVLD (145 aa)). The Nudix box motif lies at 44 to 65 (GGVEKGEDPRAAALRELWEETG).

It belongs to the Nudix hydrolase family. RppH subfamily. A divalent metal cation serves as cofactor.

Functionally, accelerates the degradation of transcripts by removing pyrophosphate from the 5'-end of triphosphorylated RNA, leading to a more labile monophosphorylated state that can stimulate subsequent ribonuclease cleavage. This chain is RNA pyrophosphohydrolase, found in Roseobacter denitrificans (strain ATCC 33942 / OCh 114) (Erythrobacter sp. (strain OCh 114)).